The sequence spans 337 residues: Putative 4-hydroxythreonine-4-phosphate dehydrogenase 2 (337 aa).

Residues His-173, His-217, and His-274 each coordinate a divalent metal cation.

This sequence belongs to the PdxA family. Homodimer. The cofactor is Zn(2+). It depends on Mg(2+) as a cofactor. Requires Co(2+) as cofactor.

The protein resides in the cytoplasm. It catalyses the reaction 4-(phosphooxy)-L-threonine + NAD(+) = 3-amino-2-oxopropyl phosphate + CO2 + NADH. Its pathway is cofactor biosynthesis; pyridoxine 5'-phosphate biosynthesis; pyridoxine 5'-phosphate from D-erythrose 4-phosphate: step 4/5. Its function is as follows. Catalyzes the NAD(P)-dependent oxidation of 4-(phosphooxy)-L-threonine (HTP) into 2-amino-3-oxo-4-(phosphooxy)butyric acid which spontaneously decarboxylates to form 3-amino-2-oxopropyl phosphate (AHAP). The chain is Putative 4-hydroxythreonine-4-phosphate dehydrogenase 2 from Pseudomonas aeruginosa (strain ATCC 15692 / DSM 22644 / CIP 104116 / JCM 14847 / LMG 12228 / 1C / PRS 101 / PAO1).